A 625-amino-acid chain; its full sequence is DNA-directed RNA polymerase subunit gamma (625 aa).

4 residues coordinate Zn(2+): cysteine 71, cysteine 73, cysteine 86, and cysteine 89. Positions 467, 469, and 471 each coordinate Mg(2+).

This sequence belongs to the RNA polymerase beta' chain family. RpoC1 subfamily. In terms of assembly, in cyanobacteria the RNAP catalytic core is composed of 2 alpha, 1 beta, 1 beta', 1 gamma and 1 omega subunit. When a sigma factor is associated with the core the holoenzyme is formed, which can initiate transcription. Mg(2+) serves as cofactor. It depends on Zn(2+) as a cofactor.

It carries out the reaction RNA(n) + a ribonucleoside 5'-triphosphate = RNA(n+1) + diphosphate. Its function is as follows. DNA-dependent RNA polymerase catalyzes the transcription of DNA into RNA using the four ribonucleoside triphosphates as substrates. The protein is DNA-directed RNA polymerase subunit gamma of Gloeothece citriformis (strain PCC 7424) (Cyanothece sp. (strain PCC 7424)).